Reading from the N-terminus, the 236-residue chain is MPYEPPTHTVERSLRATTGARTVAGVDEVGRGAWAGPVTVCAAVTGLRRPPEGLTDSKLLTPRRRAELDPVLRSWVTAYALGDASPQEIDDLGMTAALRLAAVRALEGLPVRPDAVILDGKHDYLGVPWKVRTVIKGDQSCIAVAAASVIAKVHRDRMMAELGAASEDCADFDFGANAGYPSPVHRAALEERGPTAHHRLSWAYLDALPRWQHLKKVRFSAEAAALESGGQLGFEF.

The region spanning 21 to 214 (RTVAGVDEVG…LDALPRWQHL (194 aa)) is the RNase H type-2 domain. The a divalent metal cation site is built by Asp-27, Glu-28, and Asp-119.

It belongs to the RNase HII family. Requires Mn(2+) as cofactor. It depends on Mg(2+) as a cofactor.

The protein localises to the cytoplasm. The catalysed reaction is Endonucleolytic cleavage to 5'-phosphomonoester.. In terms of biological role, endonuclease that specifically degrades the RNA of RNA-DNA hybrids. This Streptomyces griseus subsp. griseus (strain JCM 4626 / CBS 651.72 / NBRC 13350 / KCC S-0626 / ISP 5235) protein is Ribonuclease HII.